The following is a 480-amino-acid chain: Lysosomal protective protein (480 aa).

The first 28 residues, 1 to 28, serve as a signal peptide directing secretion; it reads MIRAAPPPLFLLLLLLLLLVSWASRGEA. Disulfide bonds link cysteine 88-cysteine 362, cysteine 240-cysteine 256, cysteine 241-cysteine 246, and cysteine 281-cysteine 331. N-linked (GlcNAc...) asparagine glycosylation is present at asparagine 145. Serine 178 is an active-site residue. N-linked (GlcNAc...) asparagine glycosylation occurs at asparagine 333. Catalysis depends on residues aspartate 400 and histidine 457.

Belongs to the peptidase S10 family. As to quaternary structure, heterodimer of a 32 kDa chain and a 20 kDa chain; disulfide-linked.

It is found in the lysosome. It catalyses the reaction Release of a C-terminal amino acid with broad specificity.. Functionally, protective protein appears to be essential for both the activity of beta-galactosidase and neuraminidase, it associates with these enzymes and exerts a protective function necessary for their stability and activity. This protein is also a carboxypeptidase and can deamidate tachykinins. The sequence is that of Lysosomal protective protein (CTSA) from Homo sapiens (Human).